Reading from the N-terminus, the 312-residue chain is DNA primase small subunit PriS (312 aa).

Active-site residues include aspartate 88, aspartate 90, and aspartate 215.

It belongs to the eukaryotic-type primase small subunit family. Heterodimer of a small subunit (PriS) and a large subunit (PriL). Requires Mg(2+) as cofactor. Mn(2+) serves as cofactor.

Catalytic subunit of DNA primase, an RNA polymerase that catalyzes the synthesis of short RNA molecules used as primers for DNA polymerase during DNA replication. The small subunit contains the primase catalytic core and has DNA synthesis activity on its own. Binding to the large subunit stabilizes and modulates the activity, increasing the rate of DNA synthesis while decreasing the length of the DNA fragments, and conferring RNA synthesis capability. The DNA polymerase activity may enable DNA primase to also catalyze primer extension after primer synthesis. May also play a role in DNA repair. This is DNA primase small subunit PriS from Pyrobaculum arsenaticum (strain DSM 13514 / JCM 11321 / PZ6).